Consider the following 345-residue polypeptide: Probable dual-specificity RNA methyltransferase RlmN (345 aa).

The active-site Proton acceptor is Glu-90. Positions 96-327 (QSYGNSVCVT…CIVRREFGHD (232 aa)) constitute a Radical SAM core domain. Cys-103 and Cys-332 form a disulfide bridge. 3 residues coordinate [4Fe-4S] cluster: Cys-110, Cys-114, and Cys-117. Residues 160–161 (GE), Ser-192, 215–217 (SLH), and Asn-291 contribute to the S-adenosyl-L-methionine site. Residue Cys-332 is the S-methylcysteine intermediate of the active site.

Belongs to the radical SAM superfamily. RlmN family. It depends on [4Fe-4S] cluster as a cofactor.

Its subcellular location is the cytoplasm. It carries out the reaction adenosine(2503) in 23S rRNA + 2 reduced [2Fe-2S]-[ferredoxin] + 2 S-adenosyl-L-methionine = 2-methyladenosine(2503) in 23S rRNA + 5'-deoxyadenosine + L-methionine + 2 oxidized [2Fe-2S]-[ferredoxin] + S-adenosyl-L-homocysteine. It catalyses the reaction adenosine(37) in tRNA + 2 reduced [2Fe-2S]-[ferredoxin] + 2 S-adenosyl-L-methionine = 2-methyladenosine(37) in tRNA + 5'-deoxyadenosine + L-methionine + 2 oxidized [2Fe-2S]-[ferredoxin] + S-adenosyl-L-homocysteine. In terms of biological role, specifically methylates position 2 of adenine 2503 in 23S rRNA and position 2 of adenine 37 in tRNAs. The polypeptide is Probable dual-specificity RNA methyltransferase RlmN (Spiroplasma citri).